A 602-amino-acid chain; its full sequence is Elongation factor 4 (602 aa).

The 183-residue stretch at 7–189 folds into the tr-type G domain; it reads RNIRNFSIIA…AIVQRIPAPQ (183 aa). Residues 19-24 and 136-139 contribute to the GTP site; these read DHGKST and NKID.

The protein belongs to the TRAFAC class translation factor GTPase superfamily. Classic translation factor GTPase family. LepA subfamily.

It is found in the cell inner membrane. The catalysed reaction is GTP + H2O = GDP + phosphate + H(+). In terms of biological role, required for accurate and efficient protein synthesis under certain stress conditions. May act as a fidelity factor of the translation reaction, by catalyzing a one-codon backward translocation of tRNAs on improperly translocated ribosomes. Back-translocation proceeds from a post-translocation (POST) complex to a pre-translocation (PRE) complex, thus giving elongation factor G a second chance to translocate the tRNAs correctly. Binds to ribosomes in a GTP-dependent manner. The protein is Elongation factor 4 of Xylella fastidiosa (strain 9a5c).